Consider the following 249-residue polypeptide: 2,3-bisphosphoglycerate-dependent phosphoglycerate mutase (249 aa).

Residues 9–16, 22–23, Arg-61, 88–91, Lys-99, 115–116, and 184–185 contribute to the substrate site; these read RHGQSQWN, TG, ERHY, RR, and GN. The Tele-phosphohistidine intermediate role is filled by His-10. The active-site Proton donor/acceptor is Glu-88.

Belongs to the phosphoglycerate mutase family. BPG-dependent PGAM subfamily. In terms of assembly, homodimer.

The enzyme catalyses (2R)-2-phosphoglycerate = (2R)-3-phosphoglycerate. Its pathway is carbohydrate degradation; glycolysis; pyruvate from D-glyceraldehyde 3-phosphate: step 3/5. Its function is as follows. Catalyzes the interconversion of 2-phosphoglycerate and 3-phosphoglycerate. The sequence is that of 2,3-bisphosphoglycerate-dependent phosphoglycerate mutase from Stenotrophomonas maltophilia (strain K279a).